The following is a 262-amino-acid chain: Nurim (262 aa).

Topologically, residues 1 to 4 are nuclear; the sequence is MAPA. The helical transmembrane segment at 5 to 28 threads the bilayer; the sequence is LLLIPAALASFILAFGTGVEFVRF. Over 29 to 58 the chain is Perinuclear space; it reads TSLRPLLGRISESGSPDARQGWLAALQDQS. A helical membrane pass occupies residues 59-80; it reads ILVPLVWDLGLLLLFVGQHSLM. Over 81–97 the chain is Nuclear; sequence ATETVKEWMSRYFGVLQ. A helical transmembrane segment spans residues 98–114; that stretch reads RSLYVACTALALQLVMR. At 115 to 133 the chain is on the perinuclear space side; that stretch reads YWEPVPRGPVLWETRTEPW. The chain crosses the membrane as a helical span at residues 134-164; the sequence is ATWVPLLCFVLHVISWLLIFSILLVFDYAEL. At 165–191 the chain is on the nuclear side; it reads MGLKQVYYHVLGLGEPLALKSPRALRL. Residues 192–210 form a helical membrane-spanning segment; that stretch reads FSHLRHPVCVELLTVLWVV. Over 211–216 the chain is Perinuclear space; that stretch reads PTLGTD. The chain crosses the membrane as a helical span at residues 217–234; that stretch reads RLLLALLLTLYLGLAHGL. At 235–262 the chain is on the nuclear side; it reads DQHDLRYLRAQLQRKLHLLSRPQDGEAE.

This sequence belongs to the nurim family.

The protein localises to the nucleus inner membrane. This Bos taurus (Bovine) protein is Nurim (NRM).